Consider the following 699-residue polypeptide: Polyribonucleotide nucleotidyltransferase (699 aa).

Asp-488 and Asp-494 together coordinate Mg(2+). The 60-residue stretch at 555–614 folds into the KH domain; it reads PRIYSIKVNPDKIKDVIGKGGSVIRSLTEETNTIIDIEDNGIIKIVALDYDKAKQAIRRI. The region spanning 624-692 is the S1 motif domain; it reads GAVYTGKVSH…RQGRIRLSMK (69 aa).

The protein belongs to the polyribonucleotide nucleotidyltransferase family. As to quaternary structure, component of the RNA degradosome, which is a multiprotein complex involved in RNA processing and mRNA degradation. Mg(2+) serves as cofactor.

The protein localises to the cytoplasm. It carries out the reaction RNA(n+1) + phosphate = RNA(n) + a ribonucleoside 5'-diphosphate. Its function is as follows. Involved in mRNA degradation. Catalyzes the phosphorolysis of single-stranded polyribonucleotides processively in the 3'- to 5'-direction. In Blochmanniella pennsylvanica (strain BPEN), this protein is Polyribonucleotide nucleotidyltransferase.